Consider the following 781-residue polypeptide: Isoquinoline 1-oxidoreductase subunit beta (781 aa).

As to quaternary structure, heterodimer of an alpha chain and a beta chain.

The enzyme catalyses isoquinoline + A + H2O = isoquinolin-1(2H)-one + AH2. Specific towards N-containing N-heterocyclic substrates, including isoquinoline, isoquinolin-5-ol, phthalazine and quinazoline. The protein is Isoquinoline 1-oxidoreductase subunit beta (iorB) of Brevundimonas diminuta (Pseudomonas diminuta).